Reading from the N-terminus, the 299-residue chain is Protease HtpX homolog (299 aa).

Helical transmembrane passes span 15-35 (MFLTMFLLAALYLFFLAVLWQ) and 37-57 (GVSYTGIIVFVAIMLGVQYYF). Histidine 140 provides a ligand contact to Zn(2+). Glutamate 141 is a catalytic residue. Position 144 (histidine 144) interacts with Zn(2+). 2 consecutive transmembrane segments (helical) span residues 158 to 178 (FFATVASFIVQNFFYWGGAFG) and 187 to 207 (NNIMLVYLASLVVWLVSYFLI). Zn(2+) is bound at residue glutamate 215.

It belongs to the peptidase M48B family. Zn(2+) serves as cofactor.

It localises to the cell membrane. In Moorella thermoacetica (strain ATCC 39073 / JCM 9320), this protein is Protease HtpX homolog.